The primary structure comprises 470 residues: Nuclear receptor subfamily 0 group B member 1 (470 aa).

Tandem repeats lie at residues 1-67 (MAGE…YRCC), 68-133 (FCGK…YRCC), and 134-200 (FCGE…YRCC). The interval 1–253 (MAGENHQWQG…RPVALKSPQV (253 aa)) is 4 X 67 AA tandem repeats. 3 consecutive short sequence motifs (LXXLL motif) follow at residues 13-17 (LYNML), 80-84 (LYSML), and 146-150 (LYSLL). The 4; truncated repeat unit spans residues 201–253 (FCGEDHPQQGSTLYCMPTSTNQAQAAPEERPRAPWWDTSSGALRPVALKSPQV). In terms of domain architecture, NR LBD spans 205–469 (DHPQQGSTLY…DMMLEMLCTK (265 aa)). Positions 461 to 466 (MMLEML) match the AF-2 motif motif.

It belongs to the nuclear hormone receptor family. NR0 subfamily. As to quaternary structure, homodimer. Interacts with NR5A1, NR5A2, NR0B2 and with COPS2. Interacts with ESRRB; represses ESRRB activity at the GATA6 promoter.

The protein localises to the nucleus. It localises to the cytoplasm. In terms of biological role, nuclear receptor that lacks a DNA-binding domain and acts as a corepressor that inhibits the transcriptional activity of other nuclear receptors through heterodimeric interactions. Component of a cascade required for the development of the hypothalamic-pituitary-adrenal-gonadal axis. May also have a role in the development of the embryo and in the maintenance of embryonic stem cell pluripotency. This is Nuclear receptor subfamily 0 group B member 1 (NR0B1) from Pan troglodytes (Chimpanzee).